An 896-amino-acid chain; its full sequence is Alanine--tRNA ligase (896 aa).

Zn(2+)-binding residues include His574, His578, Cys677, and His681.

This sequence belongs to the class-II aminoacyl-tRNA synthetase family. The cofactor is Zn(2+).

The protein localises to the cytoplasm. It catalyses the reaction tRNA(Ala) + L-alanine + ATP = L-alanyl-tRNA(Ala) + AMP + diphosphate. Its function is as follows. Catalyzes the attachment of alanine to tRNA(Ala) in a two-step reaction: alanine is first activated by ATP to form Ala-AMP and then transferred to the acceptor end of tRNA(Ala). Also edits incorrectly charged Ser-tRNA(Ala) and Gly-tRNA(Ala) via its editing domain. The sequence is that of Alanine--tRNA ligase from Mycoplasma mycoides subsp. mycoides SC (strain CCUG 32753 / NCTC 10114 / PG1).